Here is a 366-residue protein sequence, read N- to C-terminus: NADH-quinone oxidoreductase subunit D (366 aa).

Belongs to the complex I 49 kDa subunit family. NDH-1 is composed of 14 different subunits. Subunits NuoB, C, D, E, F, and G constitute the peripheral sector of the complex.

Its subcellular location is the cell membrane. The enzyme catalyses a quinone + NADH + 5 H(+)(in) = a quinol + NAD(+) + 4 H(+)(out). In terms of biological role, NDH-1 shuttles electrons from NADH, via FMN and iron-sulfur (Fe-S) centers, to quinones in the respiratory chain. The immediate electron acceptor for the enzyme in this species is believed to be a menaquinone. Couples the redox reaction to proton translocation (for every two electrons transferred, four hydrogen ions are translocated across the cytoplasmic membrane), and thus conserves the redox energy in a proton gradient. The protein is NADH-quinone oxidoreductase subunit D of Bacillus cereus (strain ZK / E33L).